Reading from the N-terminus, the 120-residue chain is Crustacean hyperglycemic hormones 4 (120 aa).

An N-terminal signal peptide occupies residues 1–26; the sequence is MVALNTLSAVSAALLVLAASPSPASA. 3 disulfide bridges follow: cysteine 53/cysteine 89, cysteine 69/cysteine 85, and cysteine 72/cysteine 98. Valine 118 carries the valine amide modification.

It belongs to the arthropod CHH/MIH/GIH/VIH hormone family.

Its subcellular location is the secreted. Hormone found in the sinus gland of isopods and decapods which controls the blood sugar level. Has a secretagogue action over the amylase released from the midgut gland. May act as a stress hormone and may be involved in the control of molting and reproduction. This chain is Crustacean hyperglycemic hormones 4 (CHH4), found in Penaeus monodon (Giant tiger prawn).